We begin with the raw amino-acid sequence, 544 residues long: Chaperonin GroEL (544 aa).

ATP contacts are provided by residues 30–33 (TLGP), Lys51, 87–91 (DGTTT), Gly415, 479–481 (NAA), and Asp495.

The protein belongs to the chaperonin (HSP60) family. In terms of assembly, forms a cylinder of 14 subunits composed of two heptameric rings stacked back-to-back. Interacts with the co-chaperonin GroES.

It is found in the cytoplasm. It catalyses the reaction ATP + H2O + a folded polypeptide = ADP + phosphate + an unfolded polypeptide.. Together with its co-chaperonin GroES, plays an essential role in assisting protein folding. The GroEL-GroES system forms a nano-cage that allows encapsulation of the non-native substrate proteins and provides a physical environment optimized to promote and accelerate protein folding. The sequence is that of Chaperonin GroEL from Acinetobacter baumannii (strain AB307-0294).